Here is a 136-residue protein sequence, read N- to C-terminus: Large ribosomal subunit protein bL17 (136 aa).

Belongs to the bacterial ribosomal protein bL17 family. Part of the 50S ribosomal subunit. Contacts protein L32.

This is Large ribosomal subunit protein bL17 from Rickettsia prowazekii (strain Madrid E).